The primary structure comprises 417 residues: Serine hydroxymethyltransferase (417 aa).

(6S)-5,6,7,8-tetrahydrofolate is bound by residues Leu-117 and 121 to 123; that span reads GHL. Lys-226 is subject to N6-(pyridoxal phosphate)lysine.

Belongs to the SHMT family. As to quaternary structure, homodimer. Pyridoxal 5'-phosphate serves as cofactor.

It localises to the cytoplasm. The enzyme catalyses (6R)-5,10-methylene-5,6,7,8-tetrahydrofolate + glycine + H2O = (6S)-5,6,7,8-tetrahydrofolate + L-serine. It functions in the pathway one-carbon metabolism; tetrahydrofolate interconversion. It participates in amino-acid biosynthesis; glycine biosynthesis; glycine from L-serine: step 1/1. In terms of biological role, catalyzes the reversible interconversion of serine and glycine with tetrahydrofolate (THF) serving as the one-carbon carrier. This reaction serves as the major source of one-carbon groups required for the biosynthesis of purines, thymidylate, methionine, and other important biomolecules. Also exhibits THF-independent aldolase activity toward beta-hydroxyamino acids, producing glycine and aldehydes, via a retro-aldol mechanism. The polypeptide is Serine hydroxymethyltransferase (Shouchella clausii (strain KSM-K16) (Alkalihalobacillus clausii)).